The sequence spans 408 residues: UPF0496 protein At5g66670 (408 aa).

2 consecutive transmembrane segments (helical) span residues 239-259 and 262-282; these read VVFA…AAMM and PVLS…GMWC.

This sequence belongs to the UPF0496 family.

It localises to the membrane. This is UPF0496 protein At5g66670 from Arabidopsis thaliana (Mouse-ear cress).